We begin with the raw amino-acid sequence, 430 residues long: Adenylosuccinate synthetase (430 aa).

Residues 12–18 and 40–42 contribute to the GTP site; these read GDEGKGK and GHT. The active-site Proton acceptor is D13. The Mg(2+) site is built by D13 and G40. IMP is bound by residues 13 to 16, 38 to 41, T128, R142, Q223, T238, and R302; these read DEGK and NAGH. The active-site Proton donor is the H41. Substrate is bound at residue 298-304; that stretch reads TTTGRPR. Residues R304, 330 to 332, and 412 to 414 each bind GTP; these read LLD and SVG.

Belongs to the adenylosuccinate synthetase family. Homodimer. The cofactor is Mg(2+).

It localises to the cytoplasm. It catalyses the reaction IMP + L-aspartate + GTP = N(6)-(1,2-dicarboxyethyl)-AMP + GDP + phosphate + 2 H(+). The protein operates within purine metabolism; AMP biosynthesis via de novo pathway; AMP from IMP: step 1/2. Plays an important role in the de novo pathway of purine nucleotide biosynthesis. Catalyzes the first committed step in the biosynthesis of AMP from IMP. This chain is Adenylosuccinate synthetase, found in Listeria monocytogenes serotype 4a (strain HCC23).